The sequence spans 273 residues: Urease accessory protein UreD (273 aa).

Belongs to the UreD family. In terms of assembly, ureD, UreF and UreG form a complex that acts as a GTP-hydrolysis-dependent molecular chaperone, activating the urease apoprotein by helping to assemble the nickel containing metallocenter of UreC. The UreE protein probably delivers the nickel.

The protein localises to the cytoplasm. Its function is as follows. Required for maturation of urease via the functional incorporation of the urease nickel metallocenter. In Rhizobium johnstonii (strain DSM 114642 / LMG 32736 / 3841) (Rhizobium leguminosarum bv. viciae), this protein is Urease accessory protein UreD.